A 392-amino-acid polypeptide reads, in one-letter code: ATP phosphoribosyltransferase regulatory subunit (392 aa).

It belongs to the class-II aminoacyl-tRNA synthetase family. HisZ subfamily. As to quaternary structure, heteromultimer composed of HisG and HisZ subunits.

The protein resides in the cytoplasm. Its pathway is amino-acid biosynthesis; L-histidine biosynthesis; L-histidine from 5-phospho-alpha-D-ribose 1-diphosphate: step 1/9. Functionally, required for the first step of histidine biosynthesis. May allow the feedback regulation of ATP phosphoribosyltransferase activity by histidine. This Synechococcus sp. (strain WH7803) protein is ATP phosphoribosyltransferase regulatory subunit.